A 296-amino-acid chain; its full sequence is Arginase (296 aa).

4 residues coordinate Mn(2+): H98, D124, H126, and D128. Residues N130, S137, and D178 each coordinate L-arginine. Positions 225 and 227 each coordinate Mn(2+). 2 residues coordinate L-arginine: D227 and T239.

It belongs to the arginase family. In terms of assembly, monomer. Homodimer; dimerization is dispensable for catalytic activity. It depends on Mn(2+) as a cofactor.

The enzyme catalyses L-arginine + H2O = urea + L-ornithine. The protein operates within nitrogen metabolism; urea cycle; L-ornithine and urea from L-arginine: step 1/1. Substitution of the loosely bound surface exposed Mn(2+) with Mg(2+), Zn(2+), Ni(2+) or Co(2+) results in similar catalytic activity, substitution with Cd(2+) and Cu(2+) reduces catalytic activity and substitution with Hg(2+) and Ca(2+) inhibits the enzyme. Inhibited by L-norvaline. Its function is as follows. Catalyzes the hydrolysis of L-arginine into urea and L-ornithine, which is a precursor for polyamine biosynthesis. By depleting host L-arginine, a substrate for nitric oxide synthase (NOS), prevents the production of nitric oxide (NO) by host activated macrophages, and thus allows the parasite to evade host immune response. This Entamoeba histolytica (strain ATCC 30459 / HM-1:IMSS / ABRM) protein is Arginase.